The primary structure comprises 277 residues: MKPSFSLPHFVNDQLDQFKISDKSFSSRLMLGTGKYKNLQDAINSINVSGANIVTVAIRRAQNTKNLGRTNLIDGLDWSKLWILPNTAGCESAEEAVRIASLGQEIVKKLGQFDNNFIKLEVIPDSRYLLPDPIGTLKAAEYLINKGFVVMPYIGADPVLAKQLENIGCATVMPLASPIGSGKGLRNLLNLKIIIENAKIPVIIDAGIGTPSEAGKVMELGASAVLVNTAIARAKNSQTMARAMSLAVESGRLTYIAGRMPISEKAEPSSPILGISK.

Catalysis depends on lysine 119, which acts as the Schiff-base intermediate with DXP. 1-deoxy-D-xylulose 5-phosphate-binding positions include glycine 180, 206-207, and 228-229; these read AG and NT.

It belongs to the ThiG family. Homotetramer. Forms heterodimers with either ThiH or ThiS.

It localises to the plastid. The protein localises to the chloroplast. It carries out the reaction [ThiS sulfur-carrier protein]-C-terminal-Gly-aminoethanethioate + 2-iminoacetate + 1-deoxy-D-xylulose 5-phosphate = [ThiS sulfur-carrier protein]-C-terminal Gly-Gly + 2-[(2R,5Z)-2-carboxy-4-methylthiazol-5(2H)-ylidene]ethyl phosphate + 2 H2O + H(+). Its pathway is cofactor biosynthesis; thiamine diphosphate biosynthesis. In terms of biological role, catalyzes the rearrangement of 1-deoxy-D-xylulose 5-phosphate (DXP) to produce the thiazole phosphate moiety of thiamine. Sulfur is provided by the thiocarboxylate moiety of the carrier protein ThiS. In vitro, sulfur can be provided by H(2)S. The protein is Thiazole synthase of Porphyra purpurea (Red seaweed).